The primary structure comprises 899 residues: Protein translocase subunit SecA (899 aa).

ATP is bound by residues glutamine 87, 105–109, and aspartate 512; that span reads GEGKT. Disordered regions lie at residues 573 to 592 and 861 to 899; these read RRID…PGSS and ITVN…CCGK. Residues cysteine 885, cysteine 887, cysteine 896, and cysteine 897 each coordinate Zn(2+).

Belongs to the SecA family. As to quaternary structure, monomer and homodimer. Part of the essential Sec protein translocation apparatus which comprises SecA, SecYEG and auxiliary proteins SecDF-YajC and YidC. The cofactor is Zn(2+).

The protein localises to the cell inner membrane. It localises to the cytoplasm. It catalyses the reaction ATP + H2O + cellular proteinSide 1 = ADP + phosphate + cellular proteinSide 2.. Part of the Sec protein translocase complex. Interacts with the SecYEG preprotein conducting channel. Has a central role in coupling the hydrolysis of ATP to the transfer of proteins into and across the cell membrane, serving as an ATP-driven molecular motor driving the stepwise translocation of polypeptide chains across the membrane. In Trichlorobacter lovleyi (strain ATCC BAA-1151 / DSM 17278 / SZ) (Geobacter lovleyi), this protein is Protein translocase subunit SecA.